The following is a 173-amino-acid chain: Endosomal/vacuolar adapter protein YPT35 (173 aa).

A PX domain is found at 40 to 173; that stretch reads ERAFVTNCTI…LVIQFLRPRK (134 aa).

It belongs to the YPT35 family.

The protein localises to the endosome membrane. It is found in the vacuole membrane. Its function is as follows. Recruits the lipid transfer protein VPS13 to endosomal and vacuolar membranes. The chain is Endosomal/vacuolar adapter protein YPT35 (YPT35) from Candida glabrata (strain ATCC 2001 / BCRC 20586 / JCM 3761 / NBRC 0622 / NRRL Y-65 / CBS 138) (Yeast).